Here is a 76-residue protein sequence, read N- to C-terminus: Sulfur carrier protein TusA (76 aa).

The active-site Cysteine persulfide intermediate is Cys14.

It belongs to the sulfur carrier protein TusA family. Interacts with IscS.

It localises to the cytoplasm. The protein operates within tRNA modification. In terms of biological role, sulfur carrier protein involved in sulfur trafficking in the cell. Part of a sulfur-relay system required for 2-thiolation during synthesis of 2-thiouridine of the modified wobble base 5-methylaminomethyl-2-thiouridine (mnm(5)s(2)U) in tRNA. Interacts with IscS and stimulates its cysteine desulfurase activity. Accepts an activated sulfur from IscS, which is then transferred to TusD, and thus determines the direction of sulfur flow from IscS to 2-thiouridine formation. Also appears to be involved in sulfur transfer for the biosynthesis of molybdopterin. The protein is Sulfur carrier protein TusA of Buchnera aphidicola subsp. Acyrthosiphon pisum (strain Tuc7).